The chain runs to 168 residues: Protein SprT (168 aa).

The region spanning 20–166 (EKLQQANKYL…RHCQAILQLI (147 aa)) is the SprT-like domain. Residue His78 coordinates Zn(2+). Glu79 is a catalytic residue. His82 is a binding site for Zn(2+).

The protein belongs to the SprT family. Zn(2+) is required as a cofactor.

Its subcellular location is the cytoplasm. This chain is Protein SprT, found in Proteus mirabilis (strain HI4320).